Here is a 20-residue protein sequence, read N- to C-terminus: Alpha-1B-glycoprotein (20 aa).

The disordered stretch occupies residues 1–20 (AVVFDPQPALWAEADTQLEP).

In terms of assembly, interacts with CRISP3. In terms of processing, glycosylated. In terms of tissue distribution, plasma.

Its subcellular location is the secreted. The chain is Alpha-1B-glycoprotein (A1BG) from Equus asinus (Donkey).